Reading from the N-terminus, the 682-residue chain is Methionine--tRNA ligase (682 aa).

Positions 15 to 25 (PYANGAIHLGH) match the 'HIGH' region motif. 4 residues coordinate Zn(2+): Cys146, Cys149, Cys159, and Cys162. Positions 331 to 335 (KMSKS) match the 'KMSKS' region motif. Lys334 is a binding site for ATP. Positions 580-682 (DFAKLDMRVA…NGVTAGMQVK (103 aa)) constitute a tRNA-binding domain.

Belongs to the class-I aminoacyl-tRNA synthetase family. MetG type 1 subfamily. In terms of assembly, homodimer. It depends on Zn(2+) as a cofactor.

It localises to the cytoplasm. It carries out the reaction tRNA(Met) + L-methionine + ATP = L-methionyl-tRNA(Met) + AMP + diphosphate. Functionally, is required not only for elongation of protein synthesis but also for the initiation of all mRNA translation through initiator tRNA(fMet) aminoacylation. The chain is Methionine--tRNA ligase from Haemophilus influenzae (strain PittGG).